The sequence spans 283 residues: Release factor glutamine methyltransferase (283 aa).

S-adenosyl-L-methionine contacts are provided by residues 121–125, Asp144, and Asn188; that span reads GTGSG. Residue 188–191 participates in substrate binding; sequence NPPY.

This sequence belongs to the protein N5-glutamine methyltransferase family. PrmC subfamily.

It catalyses the reaction L-glutaminyl-[peptide chain release factor] + S-adenosyl-L-methionine = N(5)-methyl-L-glutaminyl-[peptide chain release factor] + S-adenosyl-L-homocysteine + H(+). Its function is as follows. Methylates the class 1 translation termination release factors RF1/PrfA and RF2/PrfB on the glutamine residue of the universally conserved GGQ motif. This is Release factor glutamine methyltransferase from Bacillus cereus (strain ATCC 14579 / DSM 31 / CCUG 7414 / JCM 2152 / NBRC 15305 / NCIMB 9373 / NCTC 2599 / NRRL B-3711).